A 184-amino-acid chain; its full sequence is Chromophore lyase CpcS/CpeS 1 (184 aa).

It belongs to the CpcS/CpeS biliprotein lyase family.

Its function is as follows. Covalently attaches a chromophore to Cys residue(s) of phycobiliproteins. This Synechococcus sp. (strain JA-3-3Ab) (Cyanobacteria bacterium Yellowstone A-Prime) protein is Chromophore lyase CpcS/CpeS 1.